Here is a 151-residue protein sequence, read N- to C-terminus: Ribosome maturation factor RimP (151 aa).

It belongs to the RimP family.

The protein localises to the cytoplasm. Its function is as follows. Required for maturation of 30S ribosomal subunits. The polypeptide is Ribosome maturation factor RimP (Shewanella sediminis (strain HAW-EB3)).